Here is a 273-residue protein sequence, read N- to C-terminus: Urease accessory protein UreD (273 aa).

This sequence belongs to the UreD family. As to quaternary structure, ureD, UreF and UreG form a complex that acts as a GTP-hydrolysis-dependent molecular chaperone, activating the urease apoprotein by helping to assemble the nickel containing metallocenter of UreC. The UreE protein probably delivers the nickel.

It is found in the cytoplasm. Functionally, required for maturation of urease via the functional incorporation of the urease nickel metallocenter. The chain is Urease accessory protein UreD from Rhizobium leguminosarum bv. viciae.